Here is a 198-residue protein sequence, read N- to C-terminus: Glycerol-3-phosphate acyltransferase 3 (198 aa).

4 helical membrane-spanning segments follow: residues 4–24, 71–91, 113–133, and 147–167; these read TYLL…LVVG, LPMV…AVLG, LLCY…TLLF, and VVAV…AMCL.

Belongs to the PlsY family. As to quaternary structure, probably interacts with PlsX.

It localises to the cell membrane. The enzyme catalyses an acyl phosphate + sn-glycerol 3-phosphate = a 1-acyl-sn-glycero-3-phosphate + phosphate. The protein operates within lipid metabolism; phospholipid metabolism. In terms of biological role, catalyzes the transfer of an acyl group from acyl-phosphate (acyl-PO(4)) to glycerol-3-phosphate (G3P) to form lysophosphatidic acid (LPA). This enzyme utilizes acyl-phosphate as fatty acyl donor, but not acyl-CoA or acyl-ACP. In Bacillus anthracis, this protein is Glycerol-3-phosphate acyltransferase 3.